Here is a 262-residue protein sequence, read N- to C-terminus: Protein NEGATIVE GRAVITROPIC RESPONSE OF ROOTS (262 aa).

The interval 1 to 40 is disordered; sequence MKFFNWMQNKLGGKQENRKSNTSTSTTYAKPEPREEFSDW. The IGT motif motif lies at 43-49; sequence SLLAIGT.

It belongs to the LAZY family.

Its function is as follows. Involved in the control of root gravitropism. The protein is Protein NEGATIVE GRAVITROPIC RESPONSE OF ROOTS of Medicago truncatula (Barrel medic).